The following is a 408-amino-acid chain: Peptidase T (408 aa).

Zn(2+) is bound at residue His-78. The active site involves Asp-80. Asp-141 provides a ligand contact to Zn(2+). Glu-175 acts as the Proton acceptor in catalysis. Residues Glu-176, Asp-198, and His-380 each contribute to the Zn(2+) site.

It belongs to the peptidase M20B family. Zn(2+) serves as cofactor.

Its subcellular location is the cytoplasm. The enzyme catalyses Release of the N-terminal residue from a tripeptide.. Cleaves the N-terminal amino acid of tripeptides. This Clostridium botulinum (strain Kyoto / Type A2) protein is Peptidase T.